A 142-amino-acid chain; its full sequence is Pro-Viral epidermal growth factor (142 aa).

Residues 1–19 form the signal peptide; sequence MSIKYLMLLFAAMIIRSLA. Topologically, residues 20-104 are extracellular; that stretch reads DSGNAIETTS…DTTTSYIPSL (85 aa). Residue Asn-34 is glycosylated (N-linked (GlcNAc...) asparagine; by host). Cys-71 and Cys-80 are disulfide-bonded. Residues 105–125 traverse the membrane as a helical segment; it reads GIVLVLVGIIITCCLLSVYMF. Topologically, residues 126–142 are cytoplasmic; the sequence is TRRTKLPIQDMVVLYFL.

It belongs to the orthopoxvirus OPG019 family. Interacts with host EGFR. In terms of processing, cleaved at the cell surface by host ADAM10, thereby releasing the secreted form of VGF.

It is found in the host membrane. The protein localises to the secreted. Its function is as follows. Stimulates cellular proliferation (hyperplasia)and mobility around infected cells to promote rapid and efficient spread of infection. This effect is beneficial for virus replication in vivo, because poxviruses replicate possibly better in proliferating cells than in quiescent cells. Acts by binding host EGFR, inducing its dimerization, autophosphorylation and leading to activation of several cellular pathways regulating cell proliferation or cell survival. The activation by host EGFR of mitogen activated protein kinases (MAPK) and extracellular-signal regulated kinases (ERK) are essential for the positive effect of vaccinia growth factor on poxvirus virulence in vivo. This is Pro-Viral epidermal growth factor (OPG019) from Cynomys gunnisoni (Gunnison's prairie dog).